Reading from the N-terminus, the 282-residue chain is Bis(5'-nucleosyl)-tetraphosphatase, symmetrical (282 aa).

It belongs to the Ap4A hydrolase family.

It carries out the reaction P(1),P(4)-bis(5'-adenosyl) tetraphosphate + H2O = 2 ADP + 2 H(+). Functionally, hydrolyzes diadenosine 5',5'''-P1,P4-tetraphosphate to yield ADP. The sequence is that of Bis(5'-nucleosyl)-tetraphosphatase, symmetrical from Salmonella paratyphi A (strain ATCC 9150 / SARB42).